The chain runs to 432 residues: Patatin-like phospholipase domain-containing protein 5 (432 aa).

Positions 12–181 (LSFSGSGYMG…SNNLPFSDCP (170 aa)) constitute a PNPLA domain. The GXGXXG signature appears at 16–21 (GSGYMG). The GXSXG signature appears at 47–51 (GSSSG). Residue Ser-49 is the Nucleophile of the active site. Asp-168 acts as the Proton acceptor in catalysis. Positions 168–170 (DGA) match the DGA/G motif. The segment at 404 to 423 (ADSGLLRQQRGTAPSGNRPL) is disordered.

The catalysed reaction is a triacylglycerol + H2O = a diacylglycerol + a fatty acid + H(+). Has abundant triacylglycerol lipase activity. The sequence is that of Patatin-like phospholipase domain-containing protein 5 from Mus musculus (Mouse).